Here is a 143-residue protein sequence, read N- to C-terminus: Lysozyme C (143 aa).

The first 15 residues, 1-15, serve as a signal peptide directing secretion; it reads MRCLLLLLLVPVPGA. The region spanning 16–143 is the C-type lysozyme domain; sequence KVFERCEWAR…LSSYVAGCGV (128 aa). Intrachain disulfides connect Cys-21-Cys-141, Cys-45-Cys-129, Cys-79-Cys-94, and Cys-90-Cys-108. Active-site residues include Glu-50 and Asp-67.

Belongs to the glycosyl hydrolase 22 family. In terms of assembly, monomer.

It is found in the secreted. It carries out the reaction Hydrolysis of (1-&gt;4)-beta-linkages between N-acetylmuramic acid and N-acetyl-D-glucosamine residues in a peptidoglycan and between N-acetyl-D-glucosamine residues in chitodextrins.. Its function is as follows. Lysozymes have primarily a bacteriolytic function; those in tissues and body fluids are associated with the monocyte-macrophage system and enhance the activity of immunoagents. The protein is Lysozyme C (lys) of Scophthalmus maximus (Turbot).